Here is an 89-residue protein sequence, read N- to C-terminus: uncharacterized protein (89 aa).

This is an uncharacterized protein from Escherichia coli (strain K12).